Reading from the N-terminus, the 702-residue chain is Phosphatase and actin regulator 4 (702 aa).

3 disordered regions span residues 1–38, 82–194, and 222–363; these read MEDP…SKFS, GVLL…SSGG, and NLSV…PFPA. The RPEL 1 repeat unit spans residues 63 to 88; sequence EVLERKISMRKPREELVKRGVLLEDP. Positions 106–120 are enriched in polar residues; sequence GHTTPIGNARSSSPV. 4 positions are modified to phosphoserine: Ser116, Ser118, Ser131, and Ser147. Polar residues predominate over residues 147 to 156; sequence STGSQPNSEA. Positions 163 to 173 are enriched in pro residues; it reads VPKPPLLPPKR. Over residues 233–250 the composition is skewed to low complexity; it reads TLPAAPASTNTTATPSLT. Phosphoserine is present on residues Ser270 and Ser291. The span at 301–318 shows a compositional bias: polar residues; that stretch reads PSTSVPTLESAAAITTKT. Phosphoserine occurs at positions 342 and 344. The span at 342–362 shows a compositional bias: pro residues; sequence SPSPPLPTHIPPEPPRTPPFP. The residue at position 358 (Thr358) is a Phosphothreonine. Position 427 is a phosphoserine (Ser427). Position 432 is a phosphothreonine (Thr432). 3 positions are modified to phosphoserine: Ser443, Ser453, and Ser464. Positions 473–536 are disordered; the sequence is KVPDDEEEEE…EEDEDESYQS (64 aa). The segment covering 486 to 497 has biased composition (low complexity); sequence PSTFSEETTPTS. Positions 508–518 are enriched in acidic residues; sequence EEEEKESDSDS. 4 positions are modified to phosphoserine: Ser514, Ser516, Ser557, and Ser590. RPEL repeat units follow at residues 583–608 and 621–646; these read NTLI…QPKN and RRLT…RFNE. The tract at residues 592 to 615 is disordered; that stretch reads RPTPEELEQRNILQPKNEADRQAE. Ser628 carries the post-translational modification Phosphoserine.

This sequence belongs to the phosphatase and actin regulator family. Binds PPP1CA and actin.

The protein resides in the cytoplasm. Its subcellular location is the cell projection. It is found in the lamellipodium. Regulator of protein phosphatase 1 (PP1) required for neural tube and optic fissure closure, and enteric neural crest cell (ENCCs) migration during development. Acts as an activator of PP1 by interacting with PPP1CA and preventing phosphorylation of PPP1CA at 'Thr-320'. During neural tube closure, localizes to the ventral neural tube and activates PP1, leading to down-regulate cell proliferation within cranial neural tissue and the neural retina. Also acts as a regulator of migration of enteric neural crest cells (ENCCs) by activating PP1, leading to dephosphorylation and subsequent activation of cofilin (COF1 or COF2) and repression of the integrin signaling through the RHO/ROCK pathway. This Pongo abelii (Sumatran orangutan) protein is Phosphatase and actin regulator 4 (PHACTR4).